The primary structure comprises 148 residues: MNLSSLKPAEGAVKSRKRIGRGPGSGLGGTSTRGHKGAKSRSGYSKKIGFEGGQMPIQRRLPKFGFKNINRVEYKPINLSVLQTLSEANSLSKISVEDLIAAGLVSRNSLVKILANGTVTTALTVEAHAFSKTAEEAIVRAGGSVVKL.

Residues methionine 1 to glutamate 51 form a disordered region. A compositionally biased stretch (gly residues) spans arginine 21–serine 31.

It belongs to the universal ribosomal protein uL15 family. In terms of assembly, part of the 50S ribosomal subunit.

In terms of biological role, binds to the 23S rRNA. The chain is Large ribosomal subunit protein uL15 from Porphyromonas gingivalis (strain ATCC 33277 / DSM 20709 / CIP 103683 / JCM 12257 / NCTC 11834 / 2561).